The sequence spans 305 residues: Ferrochelatase (305 aa).

Residues His-182 and Glu-262 each coordinate Fe cation.

It belongs to the ferrochelatase family.

It is found in the cytoplasm. It catalyses the reaction heme b + 2 H(+) = protoporphyrin IX + Fe(2+). It functions in the pathway porphyrin-containing compound metabolism; protoheme biosynthesis; protoheme from protoporphyrin-IX: step 1/1. Its function is as follows. Catalyzes the ferrous insertion into protoporphyrin IX. This is Ferrochelatase from Herpetosiphon aurantiacus (strain ATCC 23779 / DSM 785 / 114-95).